A 654-amino-acid chain; its full sequence is Carboxypeptidase Z (654 aa).

The N-terminal stretch at Met-1–Ala-20 is a signal peptide. An FZ domain is found at Thr-43–Pro-165. Disulfide bonds link Cys-48/Cys-114, Cys-56/Cys-107, Cys-98/Cys-134, Cys-123/Cys-162, and Cys-127/Cys-151. Asn-62 is a glycosylation site (N-linked (GlcNAc...) asparagine). Residues Ala-191–Val-507 enclose the Peptidase M14 domain. His-253 and Glu-256 together coordinate Zn(2+). Asn-286 carries an N-linked (GlcNAc...) asparagine glycan. Residue His-385 participates in Zn(2+) binding. The active-site Proton donor/acceptor is the Glu-477. The disordered stretch occupies residues Phe-596 to Ser-630.

The protein belongs to the peptidase M14 family. Requires Zn(2+) as cofactor.

It is found in the secreted. Its subcellular location is the extracellular space. The protein localises to the extracellular matrix. Its activity is regulated as follows. Inhibited by 2-mercaptomethyl-3-guanidinoethylthiopropanoic acid (MGTA) and guanidinoethylmercaptosuccinic acid (GEMSA). Inhibited by chelating agents such as EDTA and EGTA. In terms of biological role, cleaves substrates with C-terminal arginine residues. Probably modulates the Wnt signaling pathway, by cleaving some undefined protein. May play a role in cleavage during prohormone processing. The chain is Carboxypeptidase Z (Cpz) from Mus musculus (Mouse).